A 128-amino-acid polypeptide reads, in one-letter code: Large ribosomal subunit protein uL22 (128 aa).

Residues 1–20 (MANGHRSQIKRERNAVKDTR) are disordered. Positions 9–20 (IKRERNAVKDTR) are enriched in basic and acidic residues.

Belongs to the universal ribosomal protein uL22 family. Part of the 50S ribosomal subunit.

In terms of biological role, this protein binds specifically to 23S rRNA; its binding is stimulated by other ribosomal proteins, e.g. L4, L17, and L20. It is important during the early stages of 50S assembly. It makes multiple contacts with different domains of the 23S rRNA in the assembled 50S subunit and ribosome. The globular domain of the protein is located near the polypeptide exit tunnel on the outside of the subunit, while an extended beta-hairpin is found that lines the wall of the exit tunnel in the center of the 70S ribosome. The chain is Large ribosomal subunit protein uL22 from Lachnospira eligens (strain ATCC 27750 / DSM 3376 / VPI C15-48 / C15-B4) (Eubacterium eligens).